Consider the following 680-residue polypeptide: Leucine-rich repeat and calponin homology domain-containing protein 4 (680 aa).

The segment covering 1–22 (MAAAVAGPLAAGGEEAAASVSL) has biased composition (low complexity). Residues 1-35 (MAAAVAGPLAAGGEEAAASVSLPGSPGLPGSRSAE) are disordered. LRR repeat units follow at residues 41–64 (AVATGTLNLSNRRLKHFPRGAARS), 67–90 (LSDITQADLSRNRFPEVPEAACQL), 92–113 (SLEGLSLYHNCLKCLNPALGNL), 114–136 (TALTYLNLSRNQLSSLPPYICQL), 138–158 (LRVLIISNNKLGALPPDISTL), 159–181 (GSLRQLDVSSNELQSLPVELCSL), 182–204 (RSLRDLNVRRNQLSTLPDELGDL), 206–226 (LVRLDFSCNRISRIPVSFCRL), and 227–250 (RHLQVVLLDSNPLQSPPAQICLKG). Phosphoserine occurs at positions 279, 281, 304, 307, 309, and 313. The interval 329-528 (SELARDPRGP…PSSPESVLRP (200 aa)) is disordered. A compositionally biased stretch (basic and acidic residues) spans 330 to 345 (ELARDPRGPRQPREDG). A compositionally biased stretch (acidic residues) spans 346-355 (AGDGDLEQID). Basic and acidic residues-rich tracts occupy residues 357–371 (IDSHVPGEDEDRSAA) and 385–418 (DVEKPSSSRREEPAGEERRRPDTLQLWQERERKQ). Ser-432 is modified (phosphoserine). 2 stretches are compositionally biased toward low complexity: residues 440-453 (AAGAGASAPSTQAT) and 510-528 (RSSSQSGSSPSSPESVLRP). Phosphoserine is present on residues Ser-511, Ser-513, Ser-517, Ser-521, and Ser-586. The 114-residue stretch at 531–644 (FPQEKELISQ…VLEAVILVGG (114 aa)) folds into the Calponin-homology (CH) domain. A helical transmembrane segment spans residues 655-675 (GLGGFLLFYVVFMLLLYVVYT).

Widely expressed across tissues, with the most abundant expression in spleen, testes, thymus, intestine, and blood. Expressed in macrophages.

It localises to the cell membrane. In terms of biological role, accessory protein that regulates signaling by multiple TLRs, acting as a broad-spanning regulator of the innate immune response. In macrophages, binds LPS and promotes proper docking of LPS in lipid raft membrane. May be required for lipid raft maintenance. The polypeptide is Leucine-rich repeat and calponin homology domain-containing protein 4 (Lrch4) (Mus musculus (Mouse)).